An 87-amino-acid chain; its full sequence is Small ribosomal subunit protein bS20 (87 aa).

It belongs to the bacterial ribosomal protein bS20 family.

Functionally, binds directly to 16S ribosomal RNA. The sequence is that of Small ribosomal subunit protein bS20 from Neorickettsia sennetsu (strain ATCC VR-367 / Miyayama) (Ehrlichia sennetsu).